A 264-amino-acid polypeptide reads, in one-letter code: Major prion protein (264 aa).

Positions 1–24 (MVKSHIGSWILVLFVAMWSDVGLC) are cleaved as a signal peptide. The tract at residues 25–241 (KKRPKPGGGW…ESEAYYQRGA (217 aa)) is interaction with GRB2, ERI3 and SYN1. The tract at residues 28 to 118 (PKPGGGWNTG…QWNKPSKPKT (91 aa)) is disordered. 6 consecutive repeat copies span residues 54–62 (SQGGGGWGQ), 63–70 (PHGGGWGQ), 71–78 (PHGGGWGQ), 79–86 (PHGGGWGQ), 87–94 (PHGGGWGQ), and 95–103 (PHGGGGWGQ). The 6 X 8 AA tandem repeats of P-H-G-G-G-W-G-Q stretch occupies residues 54 to 103 (SQGGGGWGQPHGGGWGQPHGGGWGQPHGGGWGQPHGGGWGQPHGGGGWGQ). Residues 55–107 (QGGGGWGQPHGGGWGQPHGGGWGQPHGGGWGQPHGGGWGQPHGGGGWGQGGTH) are compositionally biased toward gly residues. Histidine 72, glycine 73, glycine 74, histidine 80, glycine 81, glycine 82, histidine 88, glycine 89, glycine 90, histidine 96, glycine 98, and glycine 99 together coordinate Cu(2+). The cysteines at positions 190 and 225 are disulfide-linked. Residues asparagine 192 and asparagine 208 are each glycosylated (N-linked (GlcNAc...) asparagine). Residue alanine 241 is the site of GPI-anchor amidated alanine attachment. A propeptide spans 242-264 (SVILFSSPPVILLISFLIFLIVG) (removed in mature form).

It belongs to the prion family. As to quaternary structure, monomer and homodimer. Has a tendency to aggregate into amyloid fibrils containing a cross-beta spine, formed by a steric zipper of superposed beta-strands. Soluble oligomers may represent an intermediate stage on the path to fibril formation. Copper binding may promote oligomerization. Interacts with GRB2, APP, ERI3/PRNPIP and SYN1. Mislocalized cytosolically exposed PrP interacts with MGRN1; this interaction alters MGRN1 subcellular location and causes lysosomal enlargement. Interacts with KIAA1191.

The protein resides in the cell membrane. It is found in the golgi apparatus. In terms of biological role, its primary physiological function is unclear. Has cytoprotective activity against internal or environmental stresses. May play a role in neuronal development and synaptic plasticity. May be required for neuronal myelin sheath maintenance. May play a role in iron uptake and iron homeostasis. Soluble oligomers are toxic to cultured neuroblastoma cells and induce apoptosis (in vitro). Association with GPC1 (via its heparan sulfate chains) targets PRNP to lipid rafts. Also provides Cu(2+) or Zn(2+) for the ascorbate-mediated GPC1 deaminase degradation of its heparan sulfate side chains. This chain is Major prion protein (PRNP), found in Tragelaphus imberbis (Lesser kudu).